The chain runs to 95 residues: Large ribosomal subunit protein uL23 (95 aa).

The protein belongs to the universal ribosomal protein uL23 family. In terms of assembly, part of the 50S ribosomal subunit. Contacts protein L29, and trigger factor when it is bound to the ribosome.

Its function is as follows. One of the early assembly proteins it binds 23S rRNA. One of the proteins that surrounds the polypeptide exit tunnel on the outside of the ribosome. Forms the main docking site for trigger factor binding to the ribosome. The chain is Large ribosomal subunit protein uL23 from Desulforamulus reducens (strain ATCC BAA-1160 / DSM 100696 / MI-1) (Desulfotomaculum reducens).